The following is a 261-amino-acid chain: MTYNPRIGGFTHVKQASFDVHVKRSEARPRTSFAQQIKRIFSKIGETLGQLFRHRAPDGAPGRVKLQGVRYVGSYRPTGDARQAIRHFVDEAVKQVAHARTPEIRQDAEFGRQVYEATLCAIFSEAKDRFCMDPATRAGNVRPAFIAALGDAARATGLPGADKQGVFTPSGAGTNPLYTEIRLRADTLMGAELAARPEYRELQSYARQQAIDLVANALPGERSNTLAEFRQTVQTLEATYRRAAQDASRDEKGAANAADGA.

Over residues 241–253 (RRAAQDASRDEKG) the composition is skewed to basic and acidic residues. The tract at residues 241-261 (RRAAQDASRDEKGAANAADGA) is disordered.

Belongs to the GEF (guanine exchange factor) SopE family. As to quaternary structure, monomer. Interacts with human CDC42.

It localises to the secreted. Its function is as follows. Activator for both CDC42 and RAC1 by directly interacting with these Rho GTPases and acting as a guanine nucleotide exchange factor (GEF). This activation results in actin cytoskeleton rearrangements and stimulates membrane ruffling, thus promoting bacterial entry into non-phagocytic cells. The protein is Guanine nucleotide exchange factor BopE (bopE) of Burkholderia thailandensis (strain ATCC 700388 / DSM 13276 / CCUG 48851 / CIP 106301 / E264).